A 426-amino-acid chain; its full sequence is S-adenosylmethionine synthase (426 aa).

His-22 is a binding site for ATP. Residue Asp-24 participates in Mg(2+) binding. K(+) is bound at residue Glu-50. 2 residues coordinate L-methionine: Glu-63 and Gln-106. The interval 106-116 is flexible loop; sequence QSPDISQGVTA. Residues 181–183, 257–258, Asp-266, 272–273, Ala-289, and Lys-293 contribute to the ATP site; these read DGK, KF, and RK. Asp-266 provides a ligand contact to L-methionine. Lys-297 contacts L-methionine.

The protein belongs to the AdoMet synthase family. Homotetramer; dimer of dimers. Mg(2+) serves as cofactor. K(+) is required as a cofactor.

It is found in the cytoplasm. The enzyme catalyses L-methionine + ATP + H2O = S-adenosyl-L-methionine + phosphate + diphosphate. It participates in amino-acid biosynthesis; S-adenosyl-L-methionine biosynthesis; S-adenosyl-L-methionine from L-methionine: step 1/1. Its function is as follows. Catalyzes the formation of S-adenosylmethionine (AdoMet) from methionine and ATP. The overall synthetic reaction is composed of two sequential steps, AdoMet formation and the subsequent tripolyphosphate hydrolysis which occurs prior to release of AdoMet from the enzyme. The polypeptide is S-adenosylmethionine synthase (Synechocystis sp. (strain ATCC 27184 / PCC 6803 / Kazusa)).